The primary structure comprises 344 residues: Probable glucan endo-1,3-beta-glucosidase At4g16260 (344 aa).

Residues 1 to 21 (MTTLFLLIALFITTILNPTSG) form the signal peptide. Glutamate 116 (proton donor) is an active-site residue. Glutamate 257 acts as the Nucleophile in catalysis.

The protein belongs to the glycosyl hydrolase 17 family. (Microbial infection) Interacts with the 30C02 effector protein (AC G3GD54) of the beet cyst nematode Heterodera schachtii. Interaction with the 30C02 effector protein may potentially suppress beta-1,3-glucanase activity and plant defense.

Its subcellular location is the secreted. The catalysed reaction is Hydrolysis of (1-&gt;3)-beta-D-glucosidic linkages in (1-&gt;3)-beta-D-glucans.. Functionally, may be involved in plant defense against cyst nematode pathogens. The protein is Probable glucan endo-1,3-beta-glucosidase At4g16260 of Arabidopsis thaliana (Mouse-ear cress).